We begin with the raw amino-acid sequence, 37 residues long: Potassium channel toxin alpha-KTx 11.1 (37 aa).

3 disulfides stabilise this stretch: Cys8-Cys27, Cys13-Cys33, and Cys17-Cys35.

It belongs to the short scorpion toxin superfamily. Potassium channel inhibitor family. Alpha-KTx 11 subfamily. In terms of tissue distribution, expressed by the venom gland.

It is found in the secreted. Its function is as follows. Binds and inhibits voltage-sensitive potassium channels. Inhibits the vertebrate potassium channels Kv1.1/KCNA1, Kv1.2/KCNA2 and Kv1.3/KCNA3 with low affinity. Also weakly inhibits Kv7.1/KCNQ1 (10 uM of the toxin inhibits currents by 21.43%). In Parabuthus villosus (Black hairy thick-tailed scorpion), this protein is Potassium channel toxin alpha-KTx 11.1.